Reading from the N-terminus, the 240-residue chain is Ribosomal RNA small subunit methyltransferase J (240 aa).

Residues 93 to 94 and Asp162 contribute to the S-adenosyl-L-methionine site; that span reads RD.

Belongs to the methyltransferase superfamily. RsmJ family.

The protein localises to the cytoplasm. The catalysed reaction is guanosine(1516) in 16S rRNA + S-adenosyl-L-methionine = N(2)-methylguanosine(1516) in 16S rRNA + S-adenosyl-L-homocysteine + H(+). Its function is as follows. Specifically methylates the guanosine in position 1516 of 16S rRNA. The chain is Ribosomal RNA small subunit methyltransferase J from Francisella philomiragia subsp. philomiragia (strain ATCC 25017 / CCUG 19701 / FSC 153 / O#319-036).